Here is a 618-residue protein sequence, read N- to C-terminus: DNA mismatch repair protein MutL (618 aa).

This sequence belongs to the DNA mismatch repair MutL/HexB family.

In terms of biological role, this protein is involved in the repair of mismatches in DNA. It is required for dam-dependent methyl-directed DNA mismatch repair. May act as a 'molecular matchmaker', a protein that promotes the formation of a stable complex between two or more DNA-binding proteins in an ATP-dependent manner without itself being part of a final effector complex. The chain is DNA mismatch repair protein MutL from Porphyromonas gingivalis (strain ATCC BAA-308 / W83).